The chain runs to 64 residues: Large ribosomal subunit protein uL29 (64 aa).

This sequence belongs to the universal ribosomal protein uL29 family.

The chain is Large ribosomal subunit protein uL29 from Cupriavidus metallidurans (strain ATCC 43123 / DSM 2839 / NBRC 102507 / CH34) (Ralstonia metallidurans).